The chain runs to 223 residues: UPF0758 protein FMG_0357 (223 aa).

In terms of domain architecture, MPN spans 101–223; sequence SLNDPDSVAE…SLSMRKGMYF (123 aa). Residues histidine 172, histidine 174, and aspartate 185 each coordinate Zn(2+). The JAMM motif signature appears at 172-185; that stretch reads HNHPSGSLIPSNAD.

This sequence belongs to the UPF0758 family.

This Finegoldia magna (strain ATCC 29328 / DSM 20472 / WAL 2508) (Peptostreptococcus magnus) protein is UPF0758 protein FMG_0357.